A 541-amino-acid polypeptide reads, in one-letter code: Chaperonin GroEL 2 (541 aa).

ATP-binding positions include 29 to 32 (TLGP), 86 to 90 (DGTTT), glycine 414, 478 to 480 (DAA), and aspartate 494.

This sequence belongs to the chaperonin (HSP60) family. In terms of assembly, forms a cylinder of 14 subunits composed of two heptameric rings stacked back-to-back. Interacts with the co-chaperonin GroES.

It localises to the cytoplasm. It carries out the reaction ATP + H2O + a folded polypeptide = ADP + phosphate + an unfolded polypeptide.. Its function is as follows. Together with its co-chaperonin GroES, plays an essential role in assisting protein folding. The GroEL-GroES system forms a nano-cage that allows encapsulation of the non-native substrate proteins and provides a physical environment optimized to promote and accelerate protein folding. The protein is Chaperonin GroEL 2 of Frankia casuarinae (strain DSM 45818 / CECT 9043 / HFP020203 / CcI3).